The primary structure comprises 404 residues: MHAWPDPSVPVVAGTPVPLKLFDTADQRVKEVDTTPDANGEVGMYVCGITPYDSTHLGHAATYLTFDLAQRQLLANGHKVHYAQNITDVDDPLFERAERDGVDWRELGTSQINLFRSDMEILSVIPPRDYIGAMESVDEVIAMVQQLLDAGAAYELDQGDIYASIDATEQFGYESNLDRATMEEYFAERGGDPDREGKRDPLDALIWRGHREGEPAWDSPFGPGRPGWHVECSAIATNRLGSHFAIQGGGSDLAFPHHEFSAAHAEAALKVERMAGHYVHAGMIALDGVKMSKSLGNLVFVHKLSEAGHDPSAIRLAVFAGHYREDRDFSDAILAEAEERLTRWREQLAGEVSEAEATEVVDKLRAILADDLNTPEALSLLDGAAGDCNQIIATALDGLLGVRI.

Zn(2+) is bound at residue Cys47. L-cysteinyl-5'-AMP contacts are provided by residues 47 to 50, Thr62, and 85 to 87; these read CGIT and NIT. A 'HIGH' region motif is present at residues 49–59; that stretch reads ITPYDSTHLGH. The 'ERGGDP' region signature appears at 188–193; it reads ERGGDP. Trp228 is a binding site for L-cysteinyl-5'-AMP. Cys232 lines the Zn(2+) pocket. 250–252 provides a ligand contact to L-cysteinyl-5'-AMP; it reads GSD. A Zn(2+)-binding site is contributed by His257. Ile284 lines the L-cysteinyl-5'-AMP pocket. The 'KMSKS' region motif lies at 290–294; that stretch reads KMSKS.

This sequence belongs to the class-I aminoacyl-tRNA synthetase family. MshC subfamily. Monomer. Zn(2+) is required as a cofactor.

The catalysed reaction is 1D-myo-inositol 2-amino-2-deoxy-alpha-D-glucopyranoside + L-cysteine + ATP = 1D-myo-inositol 2-(L-cysteinylamino)-2-deoxy-alpha-D-glucopyranoside + AMP + diphosphate + H(+). Its function is as follows. Catalyzes the ATP-dependent condensation of GlcN-Ins and L-cysteine to form L-Cys-GlcN-Ins. The polypeptide is L-cysteine:1D-myo-inositol 2-amino-2-deoxy-alpha-D-glucopyranoside ligase 1 (Corynebacterium jeikeium (strain K411)).